The sequence spans 154 residues: uncharacterized protein (154 aa).

The chain crosses the membrane as a helical span at residues 23-43; the sequence is SAVALVTFAGAALSGVIPAIA.

Its subcellular location is the membrane. This is an uncharacterized protein from Mycobacterium tuberculosis (strain CDC 1551 / Oshkosh).